A 233-amino-acid polypeptide reads, in one-letter code: MAIVTLDEMLEAGVHFGHQSRRWNPKMSQYIFTERNGIHIIDLVQTAQLLAEAYDFLRISAEEGKKVLFIGTKRQAANIIAQEATRCGAFYINQRWLGGTLTNWTTIQSRVEYLKELEMREESGALDLLPKKEAAILRRQLEKLRKSLGGIQTMRHIPDIVVIVDQKRENNAVQECKKLNIPIIALLDTNSDPDVVDIPIPGNDDAIRSIKLIIGKLADAILEGSHTKTSSAE.

It belongs to the universal ribosomal protein uS2 family.

Its subcellular location is the plastid. It localises to the cyanelle. The protein is Small ribosomal subunit protein uS2c (rps2) of Cyanophora paradoxa.